The following is an 864-amino-acid chain: Calphotin (864 aa).

Residues 816–858 (LQTTDVSLLAIAATLDAIGEKLKDQKARNQQVMDRLCEIEKIL) are leucine-zipper.

Homodimer. In terms of tissue distribution, soma and axons of photoreceptor cells of compound eyes and ocelli.

The protein resides in the cytoplasm. Functionally, plays important roles in both rhabdomere development and in photoreceptor cell survival. Might function as a calcium-sequestering 'sponge' to regulate the amount of free cytoplasmic calcium. It binds 0.3 mole of Ca(2+) per mole of protein. This chain is Calphotin (Cpn), found in Drosophila melanogaster (Fruit fly).